A 299-amino-acid polypeptide reads, in one-letter code: tRNA pseudouridine synthase B (299 aa).

Asp38 (nucleophile) is an active-site residue.

This sequence belongs to the pseudouridine synthase TruB family. Type 1 subfamily.

It catalyses the reaction uridine(55) in tRNA = pseudouridine(55) in tRNA. Its function is as follows. Responsible for synthesis of pseudouridine from uracil-55 in the psi GC loop of transfer RNAs. The protein is tRNA pseudouridine synthase B of Alkaliphilus oremlandii (strain OhILAs) (Clostridium oremlandii (strain OhILAs)).